A 925-amino-acid chain; its full sequence is Protein translocase subunit SecA (925 aa).

Residues Gln87, 105–109, and Asp515 contribute to the ATP site; that span reads GEGKT. 4 residues coordinate Zn(2+): Cys909, Cys911, Cys920, and His921.

Belongs to the SecA family. In terms of assembly, monomer and homodimer. Part of the essential Sec protein translocation apparatus which comprises SecA, SecYEG and auxiliary proteins SecDF-YajC and YidC. Zn(2+) serves as cofactor.

It localises to the cell inner membrane. The protein localises to the cytoplasm. It carries out the reaction ATP + H2O + cellular proteinSide 1 = ADP + phosphate + cellular proteinSide 2.. Part of the Sec protein translocase complex. Interacts with the SecYEG preprotein conducting channel. Has a central role in coupling the hydrolysis of ATP to the transfer of proteins into and across the cell membrane, serving both as a receptor for the preprotein-SecB complex and as an ATP-driven molecular motor driving the stepwise translocation of polypeptide chains across the membrane. In Cupriavidus taiwanensis (strain DSM 17343 / BCRC 17206 / CCUG 44338 / CIP 107171 / LMG 19424 / R1) (Ralstonia taiwanensis (strain LMG 19424)), this protein is Protein translocase subunit SecA.